The following is a 502-amino-acid chain: Hexokinase-2 (502 aa).

The chain crosses the membrane as a helical span at residues 4–24; it reads VAVATTVVCSVAVCAAAALIV. Positions 35–487 constitute a Hexokinase domain; it reads ARVIEILKAF…SGVGAALLAA (453 aa). The segment at 90–228 is hexokinase small subdomain; that stretch reads SGDETGFFYA…GLDMLVAALV (139 aa). Positions 104, 105, and 106 each coordinate ADP. D-glucose contacts are provided by Thr-194, Lys-195, Asn-229, and Asp-230. A hexokinase large subdomain region spans residues 229–476; that stretch reads NDTIGTLAGG…ESVEVILSND (248 aa). Thr-253 is an ADP binding site. Residues Asn-256, Glu-284, and Glu-315 each contribute to the D-glucose site. Position 441 (Gly-441) interacts with ADP.

This sequence belongs to the hexokinase family. In terms of tissue distribution, highly expressed in siliques, at intermediate levels in roots and flowers, and at lower levels in stems, rosette and cauline leaves.

The protein localises to the mitochondrion outer membrane. It catalyses the reaction a D-hexose + ATP = a D-hexose 6-phosphate + ADP + H(+). The catalysed reaction is D-fructose + ATP = D-fructose 6-phosphate + ADP + H(+). It carries out the reaction D-glucose + ATP = D-glucose 6-phosphate + ADP + H(+). It participates in carbohydrate metabolism; hexose metabolism. The protein operates within carbohydrate degradation; glycolysis; D-glyceraldehyde 3-phosphate and glycerone phosphate from D-glucose: step 1/4. Fructose and glucose phosphorylating enzyme. May be involved in the phosphorylation of glucose during the export from mitochondrion to cytosol. Acts as a sugar sensor which may regulate sugar-dependent gene repression or activation. Mediates the effects of sugar on plant growth and development independently of its catalytic activity or the sugar metabolism. May regulate the execution of program cell death in plant cells. This is Hexokinase-2 (HXK2) from Arabidopsis thaliana (Mouse-ear cress).